Consider the following 245-residue polypeptide: Small ribosomal subunit protein uS3 (245 aa).

Residues 38-106 (IRKYLNTRLA…EVQINIFEIK (69 aa)) form the KH type-2 domain. The interval 225-245 (YEGSGDKSVKRRKRNGIKKNE) is disordered. Over residues 233–245 (VKRRKRNGIKKNE) the composition is skewed to basic residues.

Belongs to the universal ribosomal protein uS3 family. Part of the 30S ribosomal subunit. Forms a tight complex with proteins S10 and S14.

Functionally, binds the lower part of the 30S subunit head. Binds mRNA in the 70S ribosome, positioning it for translation. The sequence is that of Small ribosomal subunit protein uS3 from Azobacteroides pseudotrichonymphae genomovar. CFP2.